Reading from the N-terminus, the 20-residue chain is TSTLSWLDEITMEELERNPY.

Belongs to the cytochrome P450 family. Requires heme as cofactor.

Functionally, P450-RRI catalyzes the O-dealkylation of 2-ethoxyphenol and 2-methoxyphenol to produce catechol. The cytochrome binds other ortho-substituted phenols, including 2-ethoxyphenol, 2-methylphenol and 2-chlorophenol. The chain is Cytochrome P450-RR1 from Rhodococcus rhodochrous.